The chain runs to 87 residues: Pro-gurmarin (87 aa).

Positions 1-20 (MAKFAAIVLLILVASATVNA) are cleaved as a signal peptide. Residues 21–52 (VKEHDELPTTGMSRKILLQPVFKSLIISIAEG) constitute a propeptide that is removed on maturation. At glutamine 53 the chain carries Pyrrolidone carboxylic acid. 3 disulfide bridges follow: cysteine 55–cysteine 70, cysteine 62–cysteine 75, and cysteine 69–cysteine 85.

Expressed in leaves (at protein level).

Peptide that strongly, but reversibly, suppresses the sweet taste-response to various sweeteners, including sugars, sweet amino acids and the artificial sweetener saccharin. In rodents, potentially binds to a sweet taste receptor present on apical microvilli of a subset of taste bud cells. Highly effective at blocking the sweet taste-response in rodents such as rats and mice, though mice may possess a mix of gurmarin-sensitive and -insensitive receptors. Has almost no effect on the sweet taste-response in humans. Inhibits Staphylococcus aureus biofilm formation without affecting bacterial viability. May be one of at least 9 different disulfide-rich peptides produced with varying properties. This Gymnema sylvestre (Gurmar) protein is Pro-gurmarin.